We begin with the raw amino-acid sequence, 352 residues long: Biotin synthase (352 aa).

The region spanning 44–262 (NRVQVSTLLS…LAVARILMPQ (219 aa)) is the Radical SAM core domain. Residues Cys59, Cys63, and Cys66 each contribute to the [4Fe-4S] cluster site. Residues Cys103, Cys134, Cys194, and Arg266 each contribute to the [2Fe-2S] cluster site.

It belongs to the radical SAM superfamily. Biotin synthase family. As to quaternary structure, homodimer. Requires [4Fe-4S] cluster as cofactor. [2Fe-2S] cluster serves as cofactor.

It carries out the reaction (4R,5S)-dethiobiotin + (sulfur carrier)-SH + 2 reduced [2Fe-2S]-[ferredoxin] + 2 S-adenosyl-L-methionine = (sulfur carrier)-H + biotin + 2 5'-deoxyadenosine + 2 L-methionine + 2 oxidized [2Fe-2S]-[ferredoxin]. It functions in the pathway cofactor biosynthesis; biotin biosynthesis; biotin from 7,8-diaminononanoate: step 2/2. Functionally, catalyzes the conversion of dethiobiotin (DTB) to biotin by the insertion of a sulfur atom into dethiobiotin via a radical-based mechanism. The polypeptide is Biotin synthase (Pseudomonas savastanoi pv. phaseolicola (strain 1448A / Race 6) (Pseudomonas syringae pv. phaseolicola (strain 1448A / Race 6))).